Reading from the N-terminus, the 24-residue chain is Metallothionein (24 aa).

Residues Cys3, Cys5, Cys8, Cys10, Cys17, Cys19, and Cys22 each contribute to the Cd(2+) site.

Belongs to the metallothionein superfamily. Type 8 family. In terms of processing, contains 4 disulfide bonds.

Functionally, metallothioneins have a high content of cysteine residues that bind various heavy metals. The polypeptide is Metallothionein (Neonectria lugdunensis (Aquatic fungus)).